A 460-amino-acid polypeptide reads, in one-letter code: Bifunctional protein GlmU (460 aa).

The interval 1-232 (MENVAAIILA…SDEIMGVNDR (232 aa)) is pyrophosphorylase. Residues 9-12 (LAAG), Lys-23, Gln-75, and 80-81 (GT) each bind UDP-N-acetyl-alpha-D-glucosamine. Residue Asp-105 coordinates Mg(2+). Residues Gly-142, Glu-157, Asn-172, and Asn-230 each coordinate UDP-N-acetyl-alpha-D-glucosamine. Asn-230 is a Mg(2+) binding site. Residues 233–253 (AQLAQAARILRRRINRDLMLS) form a linker region. The interval 254–460 (GVSLVDPEQT…GWRIRMKKKT (207 aa)) is N-acetyltransferase. The UDP-N-acetyl-alpha-D-glucosamine site is built by Arg-336 and Lys-354. His-366 (proton acceptor) is an active-site residue. The UDP-N-acetyl-alpha-D-glucosamine site is built by Tyr-369 and Asn-380. Acetyl-CoA-binding positions include 389 to 390 (NY), Ser-408, Ala-426, and Arg-443.

In the N-terminal section; belongs to the N-acetylglucosamine-1-phosphate uridyltransferase family. The protein in the C-terminal section; belongs to the transferase hexapeptide repeat family. In terms of assembly, homotrimer. Requires Mg(2+) as cofactor.

The protein resides in the cytoplasm. The catalysed reaction is alpha-D-glucosamine 1-phosphate + acetyl-CoA = N-acetyl-alpha-D-glucosamine 1-phosphate + CoA + H(+). It carries out the reaction N-acetyl-alpha-D-glucosamine 1-phosphate + UTP + H(+) = UDP-N-acetyl-alpha-D-glucosamine + diphosphate. It functions in the pathway nucleotide-sugar biosynthesis; UDP-N-acetyl-alpha-D-glucosamine biosynthesis; N-acetyl-alpha-D-glucosamine 1-phosphate from alpha-D-glucosamine 6-phosphate (route II): step 2/2. Its pathway is nucleotide-sugar biosynthesis; UDP-N-acetyl-alpha-D-glucosamine biosynthesis; UDP-N-acetyl-alpha-D-glucosamine from N-acetyl-alpha-D-glucosamine 1-phosphate: step 1/1. The protein operates within bacterial outer membrane biogenesis; LPS lipid A biosynthesis. In terms of biological role, catalyzes the last two sequential reactions in the de novo biosynthetic pathway for UDP-N-acetylglucosamine (UDP-GlcNAc). The C-terminal domain catalyzes the transfer of acetyl group from acetyl coenzyme A to glucosamine-1-phosphate (GlcN-1-P) to produce N-acetylglucosamine-1-phosphate (GlcNAc-1-P), which is converted into UDP-GlcNAc by the transfer of uridine 5-monophosphate (from uridine 5-triphosphate), a reaction catalyzed by the N-terminal domain. The sequence is that of Bifunctional protein GlmU from Pelobacter propionicus (strain DSM 2379 / NBRC 103807 / OttBd1).